Reading from the N-terminus, the 444-residue chain is Porin AaxA (444 aa).

A signal peptide spans methionine 1 to alanine 19. Residues lysine 42–leucine 68 are disordered. Low complexity predominate over residues glutamine 46 to serine 56.

It belongs to the OprB family.

The protein resides in the cell outer membrane. In terms of biological role, facilitates L-arginine uptake, as part of the AaxABC system. The arginine uptake by the bacterium in the macrophage may be a virulence factor against the host innate immune response. The protein is Porin AaxA (aaxA) of Chlamydia felis (strain Fe/C-56) (Chlamydophila felis).